The sequence spans 701 residues: MNPVAPTRKVKPPRNRPSDRRQARKKARIKTKGIYLRAIKDAFVKLNPKSAIKNPVMFVVWVATLVTLAVTINPDLFGPNQQKNPQLFNGLLTGILFFTVWFANFAEAVAEGRGKAQADTLRSTKSEAIAKQLSPDGTIAEVPSTNLKQGDTVYVVAGDIIPADGEVIMGVASVDESAITGESAPVLKESGSDVASSVTGGTRIISDELIVRVTSDPGKGFIDRMIALVEGAERSKTPNEVALTVLLAVLSLVFLFVIATLPAFAYYADTPVNVPTLIALLVALIPTTIGGLLSAIGIAGMDRVAQFNVIATSGRAVEVCGDINTLVLDKTGTITLGNRLAEEFIPINGYSVEQLASVAWAASVFDDTPEGKSIVRLAEKLGIRYDLDPNLAQAVEFSAKTRMSGTNLPGGREARKGAVGAIQGFVRSRNGQTIPELDAAYERVSQQGGTPLAVCLDNEIYGVIYLKDIVKSGIRERFDQLRRMGVRTIMLTGDNHITASVIAQEAGVDDFIAEATPEDKISVIQREQAQGKLVAMTGDGTNDAPALAQANVGVAMNTGTQAAKEAANMVDLDSDPTKLIDIVSIGKQLLITRGALTTFSIANDIAKYFAIIPVIFAAANLQSLNIMNLTSTNSAVLSALIYNALIIPALIPLALKGVQFRPLTANQLLQRNILIYGLGGVIAPFIAIKLIDILITLVGLA.

Positions 1 to 26 (MNPVAPTRKVKPPRNRPSDRRQARKK) are disordered. 4 consecutive transmembrane segments (helical) span residues 57–77 (MFVVWVATLVTLAVTINPDLF), 90–110 (GLLTGILFFTVWFANFAEAVA), 241–261 (VALTVLLAVLSLVFLFVIATL), and 278–298 (IALLVALIPTTIGGLLSAIGI). Residue D329 is the 4-aspartylphosphate intermediate of the active site. ATP is bound by residues D366, E370, 397 to 404 (FSAKTRMS), and K416. Mg(2+) contacts are provided by D539 and D543. 3 consecutive transmembrane segments (helical) span residues 599-619 (FSIANDIAKYFAIIPVIFAAA), 635-655 (AVLSALIYNALIIPALIPLAL), and 681-701 (VIAPFIAIKLIDILITLVGLA).

Belongs to the cation transport ATPase (P-type) (TC 3.A.3) family. Type IA subfamily. The system is composed of three essential subunits: KdpA, KdpB and KdpC.

It localises to the cell inner membrane. The catalysed reaction is K(+)(out) + ATP + H2O = K(+)(in) + ADP + phosphate + H(+). Its function is as follows. Part of the high-affinity ATP-driven potassium transport (or Kdp) system, which catalyzes the hydrolysis of ATP coupled with the electrogenic transport of potassium into the cytoplasm. This subunit is responsible for energy coupling to the transport system and for the release of the potassium ions to the cytoplasm. The chain is Potassium-transporting ATPase ATP-binding subunit 1 from Nostoc sp. (strain PCC 7120 / SAG 25.82 / UTEX 2576).